Here is a 682-residue protein sequence, read N- to C-terminus: MIDRYKHQQLRIGSVSPQQISAWAKKILPNGEIVGEVTKPYTFHYKTNKPEKDGLFCERIFGPIKSGICACGNYRVIGDEKEDPKFCEQCGVEFVDSRVRRYQMGYIKLACPVTHVWYLKRLPSYIANLLDKPLRELEGLVYCDFSFARPIAKKPTFLRLRGSFEYEIQSWKYSIPLFFTTQGFDTFRNREISTGAGAIREQLADLDLRIITAYSLVEWKELGEEGPTGNEWEDRKIGRRKDFLVRRMELAKHFIRTNVEPEWMVLCLLPVLPPELRPIIQIDGGKLMSSDINELYRRVIYRNNTLTDLLTTSRSTPGESVMCQEKLVQEAVDTLLDNGIRGQPMRDGHNKVYKSFSDVIEGKEGRFRETLLGKRVDYSGRSVIVVGPSLSLHRCGLPREIAIELFQTFVIRGLIRQHLASNIGVAKSKIREREPIVWEILQKVIQGHPVLLNRAPTLHRLGIQAFQPILVEGCAICLHPLVRKGFNADFDGDQMAVHVPLSLEAQAEARLLMFSHMNLLSPAIGDPISVPTQDMLMGLYVLTIGNRRGICANRYNPRNRRNYQNERIDDNNYRYTKEKEPYFCSSYDALGAYRQKRINLDSPLWLRWRLDQRVIASREVPIEVQYESLGTYHEIYGHYLIVRSVKKEILCIYIRTTVGHISFYREIEEAIQGFCRACSYGT.

Residues Cys-69, Cys-71, Cys-87, and Cys-90 each coordinate Zn(2+). Residues Asp-489, Asp-491, and Asp-493 each contribute to the Mg(2+) site.

This sequence belongs to the RNA polymerase beta' chain family. RpoC1 subfamily. In plastids the minimal PEP RNA polymerase catalytic core is composed of four subunits: alpha, beta, beta', and beta''. When a (nuclear-encoded) sigma factor is associated with the core the holoenzyme is formed, which can initiate transcription. It depends on Mg(2+) as a cofactor. Requires Zn(2+) as cofactor.

It localises to the plastid. The protein resides in the chloroplast. It catalyses the reaction RNA(n) + a ribonucleoside 5'-triphosphate = RNA(n+1) + diphosphate. DNA-dependent RNA polymerase catalyzes the transcription of DNA into RNA using the four ribonucleoside triphosphates as substrates. This Platanus occidentalis (Sycamore) protein is DNA-directed RNA polymerase subunit beta'.